The primary structure comprises 184 residues: Photosystem I assembly protein Ycf4 (184 aa).

Transmembrane regions (helical) follow at residues 20-40 (GNFFWAFILFLGSLGFLVVGI) and 64-84 (IVMSFYGIAGLFISSYLWCTI).

This sequence belongs to the Ycf4 family.

The protein localises to the plastid. The protein resides in the chloroplast thylakoid membrane. Its function is as follows. Seems to be required for the assembly of the photosystem I complex. In Citrus sinensis (Sweet orange), this protein is Photosystem I assembly protein Ycf4.